We begin with the raw amino-acid sequence, 340 residues long: Ornithine carbamoyltransferase (340 aa).

Carbamoyl phosphate-binding positions include 57–60 (STRT), glutamine 84, arginine 108, and 135–138 (HPTQ). Residues asparagine 167, aspartate 231, and 235-236 (SM) contribute to the L-ornithine site. Carbamoyl phosphate is bound by residues 272–273 (CL) and arginine 317.

It belongs to the aspartate/ornithine carbamoyltransferase superfamily. OTCase family.

The protein localises to the cytoplasm. It carries out the reaction carbamoyl phosphate + L-ornithine = L-citrulline + phosphate + H(+). Its pathway is amino-acid biosynthesis; L-arginine biosynthesis; L-arginine from L-ornithine and carbamoyl phosphate: step 1/3. Reversibly catalyzes the transfer of the carbamoyl group from carbamoyl phosphate (CP) to the N(epsilon) atom of ornithine (ORN) to produce L-citrulline. The polypeptide is Ornithine carbamoyltransferase (argF) (Lactiplantibacillus plantarum (strain ATCC BAA-793 / NCIMB 8826 / WCFS1) (Lactobacillus plantarum)).